Here is a 334-residue protein sequence, read N- to C-terminus: Glycerol-3-phosphate dehydrogenase [NAD(P)+] (334 aa).

NADPH is bound by residues S10, W11, H31, R32, and K105. Sn-glycerol 3-phosphate contacts are provided by K105, G136, and S138. A140 is a binding site for NADPH. Sn-glycerol 3-phosphate contacts are provided by K191, D244, S254, R255, and N256. K191 functions as the Proton acceptor in the catalytic mechanism. R255 contributes to the NADPH binding site. NADPH is bound by residues V279 and E281.

This sequence belongs to the NAD-dependent glycerol-3-phosphate dehydrogenase family.

It localises to the cytoplasm. It catalyses the reaction sn-glycerol 3-phosphate + NAD(+) = dihydroxyacetone phosphate + NADH + H(+). The catalysed reaction is sn-glycerol 3-phosphate + NADP(+) = dihydroxyacetone phosphate + NADPH + H(+). The protein operates within membrane lipid metabolism; glycerophospholipid metabolism. Catalyzes the reduction of the glycolytic intermediate dihydroxyacetone phosphate (DHAP) to sn-glycerol 3-phosphate (G3P), the key precursor for phospholipid synthesis. This is Glycerol-3-phosphate dehydrogenase [NAD(P)+] from Chlorobium phaeobacteroides (strain BS1).